Consider the following 342-residue polypeptide: N-acetyl-gamma-glutamyl-phosphate reductase (342 aa).

C146 is a catalytic residue.

This sequence belongs to the NAGSA dehydrogenase family. Type 1 subfamily.

The protein localises to the cytoplasm. It catalyses the reaction N-acetyl-L-glutamate 5-semialdehyde + phosphate + NADP(+) = N-acetyl-L-glutamyl 5-phosphate + NADPH + H(+). The protein operates within amino-acid biosynthesis; L-arginine biosynthesis; N(2)-acetyl-L-ornithine from L-glutamate: step 3/4. Its function is as follows. Catalyzes the NADPH-dependent reduction of N-acetyl-5-glutamyl phosphate to yield N-acetyl-L-glutamate 5-semialdehyde. The protein is N-acetyl-gamma-glutamyl-phosphate reductase of Streptomyces coelicolor (strain ATCC BAA-471 / A3(2) / M145).